Here is a 147-residue protein sequence, read N- to C-terminus: Anti-sigma F factor (147 aa).

Belongs to the anti-sigma-factor family.

The catalysed reaction is L-seryl-[protein] + ATP = O-phospho-L-seryl-[protein] + ADP + H(+). It catalyses the reaction L-threonyl-[protein] + ATP = O-phospho-L-threonyl-[protein] + ADP + H(+). Functionally, binds to sigma F and blocks its ability to form an RNA polymerase holoenzyme (E-sigma F). Phosphorylates SpoIIAA on a serine residue. This phosphorylation may enable SpoIIAA to act as an anti-anti-sigma factor that counteracts SpoIIAB and thus releases sigma F from inhibition. The protein is Anti-sigma F factor of Heyndrickxia coagulans (Weizmannia coagulans).